The chain runs to 171 residues: Co-chaperone protein HscB homolog (171 aa).

Residues 2-74 form the J domain; sequence NHFELFGLPN…VTRAEYILSE (73 aa).

Belongs to the HscB family. Interacts with HscA and stimulates its ATPase activity.

Co-chaperone involved in the maturation of iron-sulfur cluster-containing proteins. Seems to help targeting proteins to be folded toward HscA. The sequence is that of Co-chaperone protein HscB homolog from Aliivibrio salmonicida (strain LFI1238) (Vibrio salmonicida (strain LFI1238)).